A 247-amino-acid polypeptide reads, in one-letter code: UPF0309 protein Teth39_1980 (247 aa).

An SIS domain is found at isoleucine 31–lysine 213.

This sequence belongs to the UPF0309 family.

This is UPF0309 protein Teth39_1980 from Thermoanaerobacter pseudethanolicus (strain ATCC 33223 / 39E) (Clostridium thermohydrosulfuricum).